The primary structure comprises 227 residues: Pro-thyrotropin-releasing hormone-A (227 aa).

The first 15 residues, 1 to 15 (MVSVWWLLLLGTTVS), serve as a signal peptide directing secretion. Residue Q75 is modified to Pyrrolidone carboxylic acid. At P77 the chain carries Proline amide. Position 89 is a pyrrolidone carboxylic acid (Q89). At P91 the chain carries Proline amide. Residue Q107 is modified to Pyrrolidone carboxylic acid. 2 disordered regions span residues 107 to 128 (QHPG…KREE) and 151 to 204 (RRQH…PCEG). A Proline amide modification is found at P109. A compositionally biased stretch (basic and acidic residues) spans 112 to 128 (RFVDDVEKRQHPGKREE). Pyrrolidone carboxylic acid is present on Q121. P123 carries the post-translational modification Proline amide. Q153 carries the post-translational modification Pyrrolidone carboxylic acid. Residue P155 is modified to Proline amide. Q168 carries the post-translational modification Pyrrolidone carboxylic acid. A Proline amide modification is found at P170. Residues 184–201 (ENSKEVGKRQHPGKRYDP) are compositionally biased toward basic and acidic residues. Q193 carries the post-translational modification Pyrrolidone carboxylic acid. Proline amide is present on P195.

The protein belongs to the TRH family.

The protein localises to the secreted. This chain is Pro-thyrotropin-releasing hormone-A (trh-a), found in Xenopus laevis (African clawed frog).